An 893-amino-acid chain; its full sequence is Probable disease resistance protein At1g62630 (893 aa).

The stretch at 24 to 68 forms a coiled coil; that stretch reads GSYTHNLEKNLVALETTMEELKAKRDDLLRRLKREEDRGLQRLSE. Residues 136-440 enclose the NB-ARC domain; sequence TEQASTSAFE…CEEIIDGSEG (305 aa). Residue 179 to 186 coordinates ATP; sequence GMGGVGKT. LRR repeat units lie at residues 516–537, 538–559, 571–593, 595–617, 618–640, and 641–663; these read VVRRMSLMGNKIHHLVGSYECM, ELTTLLLGEGEYGSIWRWSEIK, KLAVLDLSHNQSLFELPEEISNL, SLKYLNLSHTGIRHLSKGIQELK, KIIHLNLEHTSKLESIDGISSLH, and NLKVLKLYGSRLPWDLNTVKELE.

The protein belongs to the disease resistance NB-LRR family.

In terms of biological role, probable disease resistance protein. This chain is Probable disease resistance protein At1g62630, found in Arabidopsis thaliana (Mouse-ear cress).